The following is a 28-amino-acid chain: Potassium channel toxin alpha-KTx 9.10 (28 aa).

3 disulfides stabilise this stretch: Cys-3/Cys-19, Cys-6/Cys-24, and Cys-10/Cys-26.

This sequence belongs to the short scorpion toxin superfamily. Potassium channel inhibitor family. Alpha-KTx 09 subfamily. Expressed by the venom gland.

Its subcellular location is the secreted. In terms of biological role, blocks Shaker potassium channels. The polypeptide is Potassium channel toxin alpha-KTx 9.10 (Mesobuthus eupeus (Lesser Asian scorpion)).